A 260-amino-acid chain; its full sequence is Indole-3-glycerol phosphate synthase (260 aa).

It belongs to the TrpC family.

It carries out the reaction 1-(2-carboxyphenylamino)-1-deoxy-D-ribulose 5-phosphate + H(+) = (1S,2R)-1-C-(indol-3-yl)glycerol 3-phosphate + CO2 + H2O. Its pathway is amino-acid biosynthesis; L-tryptophan biosynthesis; L-tryptophan from chorismate: step 4/5. The protein is Indole-3-glycerol phosphate synthase of Thermoanaerobacter sp. (strain X514).